The primary structure comprises 263 residues: uncharacterized protein (263 aa).

Positions 1 to 22 (MGYLKRLVLYIVIMVMSVFIIG) are cleaved as a signal peptide. Residue Cys-23 is the site of N-palmitoyl cysteine attachment. Cys-23 carries S-diacylglycerol cysteine lipidation.

This sequence belongs to the staphylococcal tandem lipoprotein family.

It localises to the cell membrane. This is an uncharacterized protein from Staphylococcus aureus (strain N315).